The primary structure comprises 632 residues: Putative ferric transport system permease protein FbpB 1 (632 aa).

15 consecutive transmembrane segments (helical) span residues 5-25 (SFNL…LPLL), 37-57 (LFLT…YKIS), 58-78 (MGYS…LSLA), 93-113 (LLCI…AIFV), 144-164 (LFLS…FALY), 178-198 (IFSI…VTLM), 223-243 (GFNG…FMIL), 270-290 (YQII…IVFI), 299-319 (PLVL…YIAG), 330-350 (LGSM…IWIG), 377-397 (IIGM…SIFY), 436-456 (IYAG…AYIV), 469-489 (FLTM…YILA), 490-510 (FNNA…SMVM), and 547-567 (CFIV…TSFV). Positions 140-345 (ITNSLFLSGF…IFSLAIFIIQ (206 aa)) constitute an ABC transmembrane type-1 1 domain. An ABC transmembrane type-1 2 domain is found at 431-632 (LINTLIYAGI…DCRRYAYFPF (202 aa)).

The protein belongs to the binding-protein-dependent transport system permease family. FbpB subfamily. In terms of assembly, the complex is composed of two ATP-binding proteins (FbpC), two transmembrane proteins (FbpB) and a solute-binding protein (FbpA).

It is found in the cell inner membrane. Its function is as follows. Part of the ABC transporter complex FbpABC (TC 3.A.1.10.1) involved in Fe(3+) ions import. Probably responsible for the translocation of the substrate across the membrane. This chain is Putative ferric transport system permease protein FbpB 1 (fbpB1), found in Haemophilus influenzae (strain ATCC 51907 / DSM 11121 / KW20 / Rd).